The chain runs to 427 residues: MSTIRGTLSELSRAADAFAHEVDEAGYGDYTFLPDNSPFDLSFLTSKGLEARGSLIAAAEKILRLAKGPQGCLASFADTKGIEMGTIQALTQLEVPDKVPLQGSITYEELAGVIRVAPELLQRLVRLAALAGFLIEDESGAVRHTAMSAVFLRDTAAGDTARFLFDVDMRAYSFFADSLRLDPSGQNIGDGPTALAFQHDSDDQGNRPTIWDILERNPIQRARFHSTMQALGSFPSHLLKHILVAHDWHSIGSLVDVGGSLGHASLVIAENFPEIRITVQDLPDVVERGRSSLPTVPHAERVSFQAHDLFQEQAIIADAYFLRQILHDWPDGDAERIVRCLIPAMRPGAKLLIMDIVVPEPGAISPYMEKYLRTYDVSMFSMFSAKERTVQQLRDLVERCSARLQFQGISCPPGSATSLLSWVYSAE.

Asp281 is a binding site for S-adenosyl-L-methionine. Catalysis depends on His327, which acts as the Proton acceptor.

It belongs to the class I-like SAM-binding methyltransferase superfamily. Cation-independent O-methyltransferase family. Homodimer.

It catalyses the reaction (1S,4S)-4-[(4-hydroxyphenyl)methyl]-2,5-diazaspiro[bicyclo[3.2.1]octane-6,1'-cyclohexan]-4'-one + S-adenosyl-L-methionine = (1S,4S)-4-[(4-methoxyphenyl)methyl]-2,5-diazaspiro[bicyclo[3.2.1]octane-6,1'-cyclohexan]-4'-one + S-adenosyl-L-homocysteine + H(+). The catalysed reaction is (1S,4S)-4-[(4-hydroxyphenyl)methyl]-2-methyl-2,5-diazaspiro[bicyclo[3.2.1]octane-6,1'-cyclohexan]-4'-one + S-adenosyl-L-methionine = (1S,4S)-4-[(4-methoxyphenyl)methyl]-2-methyl-2,5-diazaspiro[bicyclo[3.2.1]octane-6,1'-cyclohexan]-4'-one + S-adenosyl-L-homocysteine + H(+). It functions in the pathway secondary metabolite biosynthesis. Functionally, O-methyltransferase; part of the gene cluster that mediates the biosynthesis of the alkaloid (-)-FR901483, a potent immunosuppressant that shows efficacy in animal models and a probable inhibitor of purine nucleotide biosynthesis by targeting phosphoribosylpyrophosphate amidotransferase (PPAT). Within the pathway, FrzF methylates the phenolic oxygen at position C4. The biosynthesis of (-)-FR901483 starts with the condensation of two L-tyrosines to yield (S,S)-dityrosyl-piperazine. This process occurs in 3 steps with the non-canonical nonribosomal peptide synthetase FrzA catalyzing the reduction of L-tyrosine into L-tyrosinal, the spontaneous condensation of 2 L-tyrosinal units, and the subsequent reduction by the NmrA-like family domain-containing oxidoreductase FrzB. The cytochrome P450 monooxygenase FrzC then performs coupling between N10 and C1' to morph the piperazine into a 1,4-diazabicyclo[3.2.1]octane spiro-fused to a 2,5-cyclohexadienone. The dienone portion is further reduced to cyclohexanone by the flavin-dependent reductase FrzD. The methyltranserases (MTs) FrzE and FrzF are then involved in the methylation at the C10' amine and the C4 phenolic oxygen, respectively. The order of the two MTs appear to be interchangeable. Cleavage of the C9-N10' bond by the dioxygenase FrzG then leads to formation of a conjugated iminium. In addition to the oxidation of C9, an additional dehydrogenation between C7 and C8 can occur to give a likely shunt product. The next biosynthetic step is the intramolecular aldol condensation catalyzed by the newly identified aldolase FrzH to yield an aza-tricyclic product with the formation of a C9-C3' bond. The short-chain dehydrogenase/reductase FrzI then produces dephospho-(-)-FR901483 that is phosphorylated at C4'-OH into (-)-FR901483 by the phosphotransferase FrzJ. The sequence is that of O-methyltransferase FrzF from Cladobotryum sp.